The primary structure comprises 60 residues: Ixodegrin YY-39 (60 aa).

The first 21 residues, 1-21 (MNAALIAALLILGALTLDATA), serve as a signal peptide directing secretion. The Cell attachment site motif lies at 49–51 (RGD).

It belongs to the ixodegrin family. Post-translationally, contains 3 disulfide bonds. Expressed in salivary glands.

It localises to the secreted. Its function is as follows. Tick salivary platelet aggregation inhibitor that plays an important part in the anti-hemostatic strategy of ticks. Inhibits platelet aggregation induced by ADP, thrombin and thromboxane A2 (TXA2). Blocks platelet adhesion to soluble collagen (most probably through the binding to alpha-2/beta-1 integrin (ITGA2/ITGB1)) and binds to purified glycoprotein IIb/IIIa (ITGA2B/ITGB3) in a dose-dependent manner. In vivo, reduces thrombus weight effectively in a rat arteriovenous shunt model and inhibits thrombosis in a carrageenan-induced mouse tail thrombosis model. This is Ixodegrin YY-39 from Ixodes scapularis (Black-legged tick).